We begin with the raw amino-acid sequence, 318 residues long: GPN-loop GTPase 2 (318 aa).

29 to 34 contributes to the GTP binding site; the sequence is GSGKST. The short motif at 85–87 is the Gly-Pro-Asn (GPN)-loop; involved in dimer interface element; that stretch reads GPN. Residue 187–190 participates in GTP binding; it reads SKMD.

The protein belongs to the GPN-loop GTPase family. In terms of assembly, heterodimers with gpn1 or gpn3. Binds to RNA polymerase II (RNAPII).

Its function is as follows. Small GTPase required for proper localization of RNA polymerase II and III (RNAPII and RNAPIII). May act at an RNAP assembly step prior to nuclear import. This Xenopus laevis (African clawed frog) protein is GPN-loop GTPase 2.